Here is a 947-residue protein sequence, read N- to C-terminus: Bifunctional glutamine synthetase adenylyltransferase/adenylyl-removing enzyme (947 aa).

Positions 1-440 are adenylyl removase; that stretch reads MTPLSSPLSQ…VFNELIGDDE (440 aa). An adenylyl transferase region spans residues 450 to 947; that stretch reads SEPWREVWQD…ASWRKWLVAV (498 aa).

It belongs to the GlnE family. Mg(2+) serves as cofactor.

The catalysed reaction is [glutamine synthetase]-O(4)-(5'-adenylyl)-L-tyrosine + phosphate = [glutamine synthetase]-L-tyrosine + ADP. It carries out the reaction [glutamine synthetase]-L-tyrosine + ATP = [glutamine synthetase]-O(4)-(5'-adenylyl)-L-tyrosine + diphosphate. Functionally, involved in the regulation of glutamine synthetase GlnA, a key enzyme in the process to assimilate ammonia. When cellular nitrogen levels are high, the C-terminal adenylyl transferase (AT) inactivates GlnA by covalent transfer of an adenylyl group from ATP to specific tyrosine residue of GlnA, thus reducing its activity. Conversely, when nitrogen levels are low, the N-terminal adenylyl removase (AR) activates GlnA by removing the adenylyl group by phosphorolysis, increasing its activity. The regulatory region of GlnE binds the signal transduction protein PII (GlnB) which indicates the nitrogen status of the cell. The sequence is that of Bifunctional glutamine synthetase adenylyltransferase/adenylyl-removing enzyme from Salmonella heidelberg (strain SL476).